The sequence spans 653 residues: Acetyl-coenzyme A synthetase 1 (653 aa).

CoA is bound by residues 191-194 (RGGR), Thr311, and Asn335. ATP is bound by residues 387–389 (GEP), 411–416 (DTWWQT), Asp500, and Arg515. Ser523 serves as a coordination point for CoA. Arg526 serves as a coordination point for ATP. Positions 537, 539, and 542 each coordinate Mg(2+). Position 584 (Arg584) interacts with CoA. An N6-acetyllysine modification is found at Lys609.

It belongs to the ATP-dependent AMP-binding enzyme family. Mg(2+) serves as cofactor. In terms of processing, acetylated. Deacetylation by the SIR2-homolog deacetylase activates the enzyme.

It carries out the reaction acetate + ATP + CoA = acetyl-CoA + AMP + diphosphate. In terms of biological role, catalyzes the conversion of acetate into acetyl-CoA (AcCoA), an essential intermediate at the junction of anabolic and catabolic pathways. AcsA undergoes a two-step reaction. In the first half reaction, AcsA combines acetate with ATP to form acetyl-adenylate (AcAMP) intermediate. In the second half reaction, it can then transfer the acetyl group from AcAMP to the sulfhydryl group of CoA, forming the product AcCoA. The sequence is that of Acetyl-coenzyme A synthetase 1 from Pseudomonas putida (strain ATCC 47054 / DSM 6125 / CFBP 8728 / NCIMB 11950 / KT2440).